The following is a 377-amino-acid chain: Guanine nucleotide-binding protein subunit beta (377 aa).

WD repeat units lie at residues 63-93 (GHTG…IVWN), 105-135 (LPCA…SIFN), 154-185 (GHKG…VLWD), 202-233 (GHTA…RLWD), 246-276 (CHEG…RLFD), 293-323 (GDIP…YVWD), and 339-369 (SHEG…KIWA).

It belongs to the WD repeat G protein beta family. In terms of assembly, g proteins are composed of 3 units, alpha, beta and gamma.

It localises to the cell membrane. The protein localises to the endoplasmic reticulum membrane. Functionally, guanine nucleotide-binding proteins (G proteins) are involved as a modulator or transducer in various transmembrane signaling systems. The beta and gamma chains are required for the GTPase activity, for replacement of GDP by GTP, and for G protein-effector interaction. This Nicotiana plumbaginifolia (Leadwort-leaved tobacco) protein is Guanine nucleotide-binding protein subunit beta.